A 271-amino-acid chain; its full sequence is Small ribosomal subunit protein uS2 (271 aa).

Residues 229-242 (KERKGKDAEEELKK) show a composition bias toward basic and acidic residues. A disordered region spans residues 229 to 271 (KERKGKDAEEELKKAAAPKAAPAAEAAPAAEAPAAPVVEAAAE). A compositionally biased stretch (low complexity) spans 243–271 (AAAPKAAPAAEAAPAAEAPAAPVVEAAAE).

The protein belongs to the universal ribosomal protein uS2 family.

The polypeptide is Small ribosomal subunit protein uS2 (Nitratidesulfovibrio vulgaris (strain DSM 19637 / Miyazaki F) (Desulfovibrio vulgaris)).